The chain runs to 787 residues: ISWI one complex protein 3 (787 aa).

Positions 1-22 are enriched in polar residues; the sequence is MDSPSNSIQNLQQEAQGSSSAQ. Disordered regions lie at residues 1–137, 672–693, and 749–787; these read MDSP…AHEQ, ILEQ…LPKD, and TEYD…RQRT. Over residues 40-50 the composition is skewed to low complexity; sequence DQSVSVSQSSD. Over residues 79–92 the composition is skewed to basic residues; sequence KPKRKRPAPPKKKA. The segment covering 100–137 has biased composition (basic and acidic residues); sequence SNDKVEKKKTTSIAKDGKPTLKTNDKKVAPKPKPAHEQ. The segment covering 675 to 689 has biased composition (polar residues); sequence QKSTTDNNPSINTNP. The span at 751–777 shows a compositional bias: acidic residues; that stretch reads YDSEEYVDDEEDDEADIYDDNDNDSSF. Basic and acidic residues predominate over residues 778–787; sequence DDGRVKRQRT.

In terms of assembly, component of the ISW1A complex, which at least consists of ISW1 and IOC3.

It is found in the nucleus. Functionally, functions as a component of the ISW1A complex, which acts in remodeling the chromatin by catalyzing an ATP-dependent alteration in the structure of nucleosomal DNA. The ISW1A complex represses gene expression at initiation through specific positioning of a promoter proximal dinucleosome. The polypeptide is ISWI one complex protein 3 (IOC3) (Saccharomyces cerevisiae (strain ATCC 204508 / S288c) (Baker's yeast)).